The sequence spans 526 residues: MNVLKYTKHSPSAHAWKLIGTSPKHGIYLPLFSIHTKNSCGIGEFLDLIPLISWCQKQGFSVIQLLPLNDTGEDTSPYNSISSVALNPLFLSLSSLPNIDTIPEVAKKLQDMHELCSTPSVSYTQVKEKKWAFLREYYQKCCKSSLEGNSNFSEFLESERYWLYPYGTFRAIKHHMHGEPINNWPKSLTDQENFPDLTKKFHDEVLFFSYLQFLCYQQLCEVKAYADQHHVLLKGDLPILISKDSCDVWYFRDYFSSSRSVGAPPDLYNSEGQNWHLPIYNFSQLAKDDYIWWKERLRYAQNFYSVYRLDHIIGFFRLWIWDSSGRGRFIPDNPKDYIKQGTEILSTMLGASSMLPIGEDLGIIPQDVKTTLTHLGICGTRIPRWERNWESDSAFIPLKDYNPLSVTTLSTHDSDTFAQWWLNSPKEAKQFAKFLHLPFQKTLTTETQIDILKLSHESASIFHINLFNDYLALCPDLVSKNLQRERINTPGTISKKNWSYRVRPSLEELAIHKKFNGYIEKILTGL.

Belongs to the disproportionating enzyme family.

The protein localises to the cytoplasm. It carries out the reaction Transfers a segment of a (1-&gt;4)-alpha-D-glucan to a new position in an acceptor, which may be glucose or a (1-&gt;4)-alpha-D-glucan.. In Chlamydia pneumoniae (Chlamydophila pneumoniae), this protein is 4-alpha-glucanotransferase (malQ).